A 284-amino-acid chain; its full sequence is UPF0276 protein PA14_21580 (284 aa).

Belongs to the UPF0276 family.

The protein is UPF0276 protein PA14_21580 of Pseudomonas aeruginosa (strain UCBPP-PA14).